We begin with the raw amino-acid sequence, 102 residues long: Small ribosomal subunit protein uS10 (102 aa).

The interval 35–58 (SGPIPLPTKTLEIPSRKSPDGEGT) is disordered.

This sequence belongs to the universal ribosomal protein uS10 family. Part of the 30S ribosomal subunit.

In terms of biological role, involved in the binding of tRNA to the ribosomes. This chain is Small ribosomal subunit protein uS10, found in Halorubrum lacusprofundi (strain ATCC 49239 / DSM 5036 / JCM 8891 / ACAM 34).